The sequence spans 767 residues: MTISPPESGEKNKKVLEDPVKADPRPIDFAKLDKPGFWSSKLSKGPKTTTWIWNLHADAHDFDVHTGDAEEATRKIFSAHFGHLAVIFIWMSAAFFHGARFSNYSGWLADPTHVKPGAQQVWAIVGQEMLNADLGANYNGIQISSGIFHMWRAWGITNESELMALAIGAVVMAALMLHAGIFHYHKAAPKMEWFQDIESMLNHHIAGLVGLGSLAWAGHCIHIGAPTAALLDAIDAGSPLVINGKEIATIADMPMPHQLCDPQIIGQIFPGLASGTGNFFSLNWLAFSDFLTFKGGLNPVTGSLWMTDVSHHHLAFGVIAIIGGHMYRTNYGIGHSMKEILDSQQGDPILFPAPKGHQGLFEFMAESRHAQLSVNLAMLGSISILVSHHMYAMPPYPYIATDYMTVLGLFTHHMWIGGLFIVGAGAHAGIAMVRDYDPAKHIDNVLDRILKARDALISHLNWVCMWLGFHSFGLYIHNDTMRALGRPQDMFSDSAIQLQPIFAQWVQSIQASAVGTFLLAGTSEALPHKALSEVFNGSLVEVGGKVAIAPIPLGTADLMIHHIHAFQIHVTVLILLKGVLYARSSRLIPDKASLGFRFPCDGPGRGGTCQVSSWDHVFLALFWMYNCLSIVIFHFSWKMQSDVWGLTGGNFAQSSITINGWLRDFLWAQASQVLTSYGQSISMYGLMFLGAHFIWAFSLMFLFSGRGYWQELFESIVWAHNKLKVAPTIQPRALSITQGRAVGVTHFLVGGIATTWAFFHARLFGLG.

Positions 1-22 (MTISPPESGEKNKKVLEDPVKA) are disordered. A compositionally biased stretch (basic and acidic residues) spans 8–22 (SGEKNKKVLEDPVKA). Transmembrane regions (helical) follow at residues 76-99 (IFSAHFGHLAVIFIWMSAAFFHGA), 162-185 (LMALAIGAVVMAALMLHAGIFHYH), 201-225 (LNHHIAGLVGLGSLAWAGHCIHIGA), 309-327 (VSHHHLAFGVIAIIGGHMY), 368-391 (RHAQLSVNLAMLGSISILVSHHMY), 407-433 (LGLFTHHMWIGGLFIVGAGAHAGIAMV), 455-477 (ALISHLNWVCMWLGFHSFGLYIH), and 558-576 (LMIHHIHAFQIHVTVLILL). Positions 600 and 609 each coordinate [4Fe-4S] cluster. A run of 2 helical transmembrane segments spans residues 616–637 (HVFLALFWMYNCLSIVIFHFSW) and 681–703 (ISMYGLMFLGAHFIWAFSLMFLF). Histidine 692 is a divinylchlorophyll a' binding site. The divinyl chlorophyll a site is built by methionine 700 and tyrosine 708. Residue tryptophan 709 participates in phylloquinone binding. Residues 741-761 (AVGVTHFLVGGIATTWAFFHA) form a helical membrane-spanning segment.

The protein belongs to the PsaA/PsaB family. In terms of assembly, the PsaA/B heterodimer binds the P700 divinyl chlorophyll special pair and subsequent electron acceptors. PSI consists of a core antenna complex that captures photons, and an electron transfer chain that converts photonic excitation into a charge separation. The cyanobacterial PSI reaction center is composed of one copy each of PsaA,B,C,D,E,F,I,J,K,L,M and X, and forms trimeric complexes. PSI electron transfer chain: 5 divinyl chlorophyll a, 1 divinyl chlorophyll a', 2 phylloquinones and 3 4Fe-4S clusters. PSI core antenna: 90 divinyl chlorophyll a, 22 carotenoids, 3 phospholipids and 1 galactolipid. P700 is a divinyl chlorophyll a/divinyl chlorophyll a' dimer, A0 is one or more divinyl chlorophyll a, A1 is one or both phylloquinones and FX is a shared 4Fe-4S iron-sulfur center. is required as a cofactor.

It is found in the cellular thylakoid membrane. It catalyses the reaction reduced [plastocyanin] + hnu + oxidized [2Fe-2S]-[ferredoxin] = oxidized [plastocyanin] + reduced [2Fe-2S]-[ferredoxin]. Functionally, psaA and PsaB bind P700, the primary electron donor of photosystem I (PSI), as well as the electron acceptors A0, A1 and FX. PSI is a plastocyanin/cytochrome c6-ferredoxin oxidoreductase, converting photonic excitation into a charge separation, which transfers an electron from the donor P700 chlorophyll pair to the spectroscopically characterized acceptors A0, A1, FX, FA and FB in turn. Oxidized P700 is reduced on the lumenal side of the thylakoid membrane by plastocyanin or cytochrome c6. This Prochlorococcus marinus (strain AS9601) protein is Photosystem I P700 chlorophyll a apoprotein A1.